The following is a 351-amino-acid chain: Adenine deaminase (351 aa).

Zn(2+) contacts are provided by His20, His22, and His200. Glu203 acts as the Proton donor in catalysis. Asp281 contacts Zn(2+). A substrate-binding site is contributed by Asp282.

This sequence belongs to the metallo-dependent hydrolases superfamily. Adenosine and AMP deaminases family. Adenine deaminase type 2 subfamily. Requires Zn(2+) as cofactor.

The catalysed reaction is adenine + H2O + H(+) = hypoxanthine + NH4(+). Its function is as follows. Catalyzes the hydrolytic deamination of adenine to hypoxanthine. Plays an important role in the purine salvage pathway and in nitrogen catabolism. This Cupriavidus taiwanensis (strain DSM 17343 / BCRC 17206 / CCUG 44338 / CIP 107171 / LMG 19424 / R1) (Ralstonia taiwanensis (strain LMG 19424)) protein is Adenine deaminase.